The chain runs to 84 residues: Venom protein SynTx (84 aa).

An N-terminal signal peptide occupies residues 1–19 (TLLLTLVVVTIVCLDLGYT). 4 disulfides stabilise this stretch: Cys-22/Cys-43, Cys-36/Cys-61, Cys-65/Cys-76, and Cys-77/Cys-82.

It belongs to the three-finger toxin family. Short-chain subfamily. Aminergic toxin sub-subfamily. As to quaternary structure, homodimer; disulfide-linked. Expressed by the venom gland.

It localises to the secreted. Its function is as follows. This protein shows a synergetic toxic effect in that it enhances the toxicity of other toxins. The polypeptide is Venom protein SynTx (Dendroaspis jamesoni jamesoni (Jameson's mamba)).